Consider the following 346-residue polypeptide: MDDNEEYDTKRKTRCGLHVHPDFYGVYLLRSVPKPKSFYIGSTPNPQRRLRQHNGELKNGGAYRTKKSGFRPWEMICLVYNFPSKNVALQFEHALQHPYQTRHIKSELRITHKRNSGNTLHHKLGNIRLLLGSSFFSRMGLKVLLFDPEVHSAWCINKFGVNVTDNVQVNVTRFEDYFSRDNNDESSGFSLSRQKESERIYFESSKKILFFDNQPCFICNETIDYQSESEVSFSSKLDVDAYLREGNMPLLAICYHENCRKLYHLSCLGLHFLEKGDELSNKTDSEEKLGDTVNYLTPLQGKCLSCNNFINWAKLSKMSTKLREYFLKDLLNTGATSQFIENDADD.

In terms of domain architecture, GIY-YIG spans 22–105; the sequence is DFYGVYLLRS…QHPYQTRHIK (84 aa). The segment at 216–306 adopts an SLX1-type zinc-finger fold; it reads CFICNETIDY…TPLQGKCLSC (91 aa).

It belongs to the SLX1 family. Forms a heterodimer with SLX4. It depends on a divalent metal cation as a cofactor.

The protein resides in the nucleus. Functionally, catalytic subunit of the SLX1-SLX4 structure-specific endonuclease that resolves DNA secondary structures generated during DNA repair and recombination. Has endonuclease activity towards branched DNA substrates, introducing single-strand cuts in duplex DNA close to junctions with ss-DNA. The polypeptide is Structure-specific endonuclease subunit SLX1 (Debaryomyces hansenii (strain ATCC 36239 / CBS 767 / BCRC 21394 / JCM 1990 / NBRC 0083 / IGC 2968) (Yeast)).